Consider the following 345-residue polypeptide: Anthranilate phosphoribosyltransferase (345 aa).

Residues G83, G86–D87, T91, N93–T96, K111–S119, and S123 each bind 5-phospho-alpha-D-ribose 1-diphosphate. G83 contacts anthranilate. Mg(2+) is bound at residue S95. N114 is a binding site for anthranilate. R169 is an anthranilate binding site. Mg(2+)-binding residues include D228 and E229.

The protein belongs to the anthranilate phosphoribosyltransferase family. In terms of assembly, homodimer. Mg(2+) is required as a cofactor.

It carries out the reaction N-(5-phospho-beta-D-ribosyl)anthranilate + diphosphate = 5-phospho-alpha-D-ribose 1-diphosphate + anthranilate. It participates in amino-acid biosynthesis; L-tryptophan biosynthesis; L-tryptophan from chorismate: step 2/5. Catalyzes the transfer of the phosphoribosyl group of 5-phosphorylribose-1-pyrophosphate (PRPP) to anthranilate to yield N-(5'-phosphoribosyl)-anthranilate (PRA). The chain is Anthranilate phosphoribosyltransferase from Paracoccus denitrificans (strain Pd 1222).